A 300-amino-acid chain; its full sequence is 2-dehydropantoate 2-reductase (300 aa).

NADP(+) is bound by residues 7–12 (GAGAIG), Lys-74, Asn-99, and Ala-123. Lys-179 (proton donor) is an active-site residue. Residues Lys-179, Asn-183, Asn-187, Asn-197, and 246 to 249 (NYNS) each bind substrate. Glu-261 is an NADP(+) binding site.

It belongs to the ketopantoate reductase family.

It is found in the cytoplasm. It carries out the reaction (R)-pantoate + NAD(+) = 2-dehydropantoate + NADH + H(+). It catalyses the reaction (R)-pantoate + NADP(+) = 2-dehydropantoate + NADPH + H(+). It participates in cofactor biosynthesis; coenzyme A biosynthesis. Its function is as follows. Catalyzes the NAD(P)H-dependent reduction of ketopantoate into pantoic acid. The sequence is that of 2-dehydropantoate 2-reductase (apbA) from Pyrococcus abyssi (strain GE5 / Orsay).